Consider the following 134-residue polypeptide: 4-carboxymuconolactone decarboxylase (134 aa).

This sequence belongs to the carboxymuconolactone decarboxylase family.

The enzyme catalyses (R)-2-(carboxymethyl)-5-oxo-2,5-dihydro-2-furoate + H(+) = (4,5-dihydro-5-oxofuran-2-yl)-acetate + CO2. It participates in aromatic compound metabolism; beta-ketoadipate pathway; 5-oxo-4,5-dihydro-2-furylacetate from 3-carboxy-cis,cis-muconate: step 2/2. This Acinetobacter baylyi (strain ATCC 33305 / BD413 / ADP1) protein is 4-carboxymuconolactone decarboxylase (pcaC).